The chain runs to 134 residues: Transmembrane protein 100 (134 aa).

The interval 1 to 23 is disordered; sequence MTEESTKENLGAPKSPTPVTMEK. A Phosphoserine modification is found at serine 15. The next 2 membrane-spanning stretches (helical) occupy residues 56 to 76 and 84 to 104; these read CIIP…AVAY and IISI…ASSA. A Phosphoserine modification is found at serine 121.

Interacts (via C-terminus) with TRPA1 and TRPV1. Interacts with TASOR. As to expression, expressed in dorsal root ganglia. Expressed in neurons as well as nerve fiber bundles connecting ganglia and fibers innervating muscle layer of the gastric body, jejunum, and proximal colon. Expressed in arterial endothelial cells and neurons of the central nervous system and peripheral nervous system (at protein level). Expressed strongly in lung, weakly in brain, heart and muscle. Expressed in enteric neurons and vascular tissue in the muscularis propria of the gastrointestinal tract.

The protein localises to the cell membrane. It localises to the membrane. Its subcellular location is the perikaryon. The protein resides in the cytoplasm. It is found in the perinuclear region. The protein localises to the endoplasmic reticulum. In terms of biological role, plays a role during embryonic arterial endothelium differentiation and vascular morphogenesis through the ACVRL1 receptor-dependent signaling pathway upon stimulation by bone morphogenetic proteins, such as GDF2/BMP9 and BMP10. Involved in the regulation of nociception, acting as a modulator of the interaction between TRPA1 and TRPV1, two molecular sensors and mediators of pain signals in dorsal root ganglia (DRG) neurons. Mechanistically, it weakens their interaction, thereby releasing the inhibition of TRPA1 by TRPV1 and increasing the single-channel open probability of the TRPA1-TRPV1 complex. This Mus musculus (Mouse) protein is Transmembrane protein 100 (Tmem100).